Consider the following 106-residue polypeptide: Large ribosomal subunit protein uL23 (106 aa).

It belongs to the universal ribosomal protein uL23 family. Part of the 50S ribosomal subunit. Contacts protein L29, and trigger factor when it is bound to the ribosome.

One of the early assembly proteins it binds 23S rRNA. One of the proteins that surrounds the polypeptide exit tunnel on the outside of the ribosome. Forms the main docking site for trigger factor binding to the ribosome. This Acinetobacter baumannii (strain AB307-0294) protein is Large ribosomal subunit protein uL23.